A 360-amino-acid polypeptide reads, in one-letter code: DNA polymerase IV (360 aa).

Residues 8–189 form the UmuC domain; sequence IIHVDMDCFF…LPLEKIPGVG (182 aa). 2 residues coordinate Mg(2+): aspartate 12 and aspartate 107. Glutamate 108 is a catalytic residue.

This sequence belongs to the DNA polymerase type-Y family. Monomer. Requires Mg(2+) as cofactor.

It is found in the cytoplasm. It catalyses the reaction DNA(n) + a 2'-deoxyribonucleoside 5'-triphosphate = DNA(n+1) + diphosphate. Poorly processive, error-prone DNA polymerase involved in untargeted mutagenesis. Copies undamaged DNA at stalled replication forks, which arise in vivo from mismatched or misaligned primer ends. These misaligned primers can be extended by PolIV. Exhibits no 3'-5' exonuclease (proofreading) activity. May be involved in translesional synthesis, in conjunction with the beta clamp from PolIII. In Vibrio cholerae serotype O1 (strain ATCC 39541 / Classical Ogawa 395 / O395), this protein is DNA polymerase IV.